We begin with the raw amino-acid sequence, 398 residues long: MSEQLLTASTPIDAAPLSDNTVQTTAPATSKINLLDLNRQQMREFFAEMGEKPFRADQVMKWMYHYCYDDFEQMTDINKGLRAKLQRVAEIRAPEVAEEQRSVDGTIKWAIKVGDQQVETVYIPEADRATLCVSSQVGCALECKFCSTAQQGFNRNLRVSEIIGQVWRAAKIIGSLKSTGTRPITNVVMMGMGEPLLNLNNVVPAMDIMMDDFGFGLSKRRVTLSTSGVVPALDKLGDMIDVALAISLHAPTDDIRDEIVPINRKYNIETFLAAVRRYLDKSKANGGRVTVEYVMLDHINDSTEQAHQLAECLKDTPCKINLIPWNPFPGAPYGRSSNSRVDRFSKVLMEYGFTTIVRKTRGDDIDAACGQLAGEVIDRTKRTLKKKMAGEPIAIKTV.

The Proton acceptor role is filled by Glu119. In terms of domain architecture, Radical SAM core spans 125 to 364 (EADRATLCVS…TIVRKTRGDD (240 aa)). Cys132 and Cys369 are disulfide-bonded. [4Fe-4S] cluster-binding residues include Cys139, Cys143, and Cys146. Residues 193–194 (GE), Ser225, 247–249 (SLH), and Asn326 contribute to the S-adenosyl-L-methionine site. Cys369 acts as the S-methylcysteine intermediate in catalysis.

Belongs to the radical SAM superfamily. RlmN family. The cofactor is [4Fe-4S] cluster.

The protein resides in the cytoplasm. The enzyme catalyses adenosine(2503) in 23S rRNA + 2 reduced [2Fe-2S]-[ferredoxin] + 2 S-adenosyl-L-methionine = 2-methyladenosine(2503) in 23S rRNA + 5'-deoxyadenosine + L-methionine + 2 oxidized [2Fe-2S]-[ferredoxin] + S-adenosyl-L-homocysteine. It catalyses the reaction adenosine(37) in tRNA + 2 reduced [2Fe-2S]-[ferredoxin] + 2 S-adenosyl-L-methionine = 2-methyladenosine(37) in tRNA + 5'-deoxyadenosine + L-methionine + 2 oxidized [2Fe-2S]-[ferredoxin] + S-adenosyl-L-homocysteine. Its function is as follows. Specifically methylates position 2 of adenine 2503 in 23S rRNA and position 2 of adenine 37 in tRNAs. m2A2503 modification seems to play a crucial role in the proofreading step occurring at the peptidyl transferase center and thus would serve to optimize ribosomal fidelity. In Yersinia pestis, this protein is Dual-specificity RNA methyltransferase RlmN.